The chain runs to 1038 residues: Type I restriction enzyme EcoR124I/EcoR124II endonuclease subunit (1038 aa).

The nuclease domain stretch occupies residues 31–249 (QSESDLEREL…LKDFTATCFQ (219 aa)). The tract at residues 250 to 469 (KHTLLNVLVN…SYVITDAIRD (220 aa)) is motor 1 domain. One can recognise a Helicase ATP-binding domain in the interval 294-439 (KNWSKPESGG…YQFGFTGTPI (146 aa)). 307-314 (HTTGSGKT) contributes to the ATP binding site. The DEAH box signature appears at 408–411 (DECH). A motor 2 domain region spans residues 470 to 702 (EKVLKFKVDY…YDATKTFGNI (233 aa)). Residues 720–732 (GDKNTKNVVLEKS) form a motor 2-helicase linker region. The helicase domain stretch occupies residues 732 to 860 (SYTEYMEGFT…NDIRDWQRRE (129 aa)). Residues 859 to 886 (REKEAEKKEKSTTDWDDVVFEVDLLKSQ) form a helicase-CTD linker region. The segment at 886–1038 (QEINLDYILG…EKFKGVGGKI (153 aa)) is C-terminal domain.

It belongs to the HsdR family. In terms of assembly, a monomer in solution. The type I restriction/modification system is composed of three polypeptides R, M and S; the restriction enzyme has stoichiometry R(2)M(2)S(1) while the methyltransferase is M(2)S(1). There is an equilibrium between R(2)M(2)S(1) and R(1)M(2)S(1); the latter is methylation and translocation proficient but restriction deficient. As to quaternary structure, (Microbial infection) Holoenenzyme interacts with Escherichia phage T7 protein Ocr; this interaction leads to the inhibition of the restriction activity, but may still allow methylation and translocation.

The enzyme catalyses Endonucleolytic cleavage of DNA to give random double-stranded fragments with terminal 5'-phosphates, ATP is simultaneously hydrolyzed.. Functionally, the restriction (R) subunit of a type I restriction enzyme that recognizes 5'-GAAN(6)RTCG-3' (for EcoR124I) and 5'-GAAN(7)RTCG-3' (for EcoR124II) and cleaves a random distance away. Subunit R is required for both nuclease and ATPase activities, but not for modification. After locating an unmethylated recognition site, the enzyme complex serves as a molecular motor that translocates DNA in an ATP-dependent manner until a collision occurs that triggers cleavage. The enzyme undergoes major structural changes to bring the motor domains into contact with DNA, allowing DNA translocation. This prevents DNA access to the catalytic domains of both the R and M subunits, preventing both restriction and methylation. The R(1)M(2)S(1) complex translocates an average of 555 bp/second on nicked DNA; the R(2)M(2)S(1) complex translocates at double that speed. The 2 R subunit motors are independent and track along the helical pitch of the DNA, inducing positive supercoiling ahead of themselves. The sequence is that of Type I restriction enzyme EcoR124I/EcoR124II endonuclease subunit from Escherichia coli.